The following is a 159-amino-acid chain: 2-C-methyl-D-erythritol 2,4-cyclodiphosphate synthase (159 aa).

A divalent metal cation is bound by residues D8 and H10. Residues D8–H10 and H34–S35 contribute to the 4-CDP-2-C-methyl-D-erythritol 2-phosphate site. H42 contributes to the a divalent metal cation binding site. 4-CDP-2-C-methyl-D-erythritol 2-phosphate-binding positions include D56 to G58, F61 to D65, A100 to L106, T132 to E135, F139, and R142.

The protein belongs to the IspF family. As to quaternary structure, homotrimer. It depends on a divalent metal cation as a cofactor.

It carries out the reaction 4-CDP-2-C-methyl-D-erythritol 2-phosphate = 2-C-methyl-D-erythritol 2,4-cyclic diphosphate + CMP. Its pathway is isoprenoid biosynthesis; isopentenyl diphosphate biosynthesis via DXP pathway; isopentenyl diphosphate from 1-deoxy-D-xylulose 5-phosphate: step 4/6. Its function is as follows. Involved in the biosynthesis of isopentenyl diphosphate (IPP) and dimethylallyl diphosphate (DMAPP), two major building blocks of isoprenoid compounds. Catalyzes the conversion of 4-diphosphocytidyl-2-C-methyl-D-erythritol 2-phosphate (CDP-ME2P) to 2-C-methyl-D-erythritol 2,4-cyclodiphosphate (ME-CPP) with a corresponding release of cytidine 5-monophosphate (CMP). The protein is 2-C-methyl-D-erythritol 2,4-cyclodiphosphate synthase of Klebsiella pneumoniae (strain 342).